A 1333-amino-acid chain; its full sequence is DNA-directed RNA polymerase subunit beta' (1333 aa).

4 residues coordinate Zn(2+): C60, C62, C75, and C78. Residues D535, D537, and D539 each coordinate Mg(2+). Residues C901, C983, C990, and C993 each coordinate Zn(2+).

Belongs to the RNA polymerase beta' chain family. The RNAP catalytic core consists of 2 alpha, 1 beta, 1 beta' and 1 omega subunit. When a sigma factor is associated with the core the holoenzyme is formed, which can initiate transcription. Mg(2+) is required as a cofactor. The cofactor is Zn(2+).

The enzyme catalyses RNA(n) + a ribonucleoside 5'-triphosphate = RNA(n+1) + diphosphate. DNA-dependent RNA polymerase catalyzes the transcription of DNA into RNA using the four ribonucleoside triphosphates as substrates. The sequence is that of DNA-directed RNA polymerase subunit beta' from Corynebacterium efficiens (strain DSM 44549 / YS-314 / AJ 12310 / JCM 11189 / NBRC 100395).